A 790-amino-acid chain; its full sequence is F-box and leucine-rich repeat protein 13 (790 aa).

One can recognise an F-box domain in the interval 237–283 (AFDISVLPEQAILQIFLYLTFKDMMACSRVNRSWMAMIQRGSLWNSI). LRR repeat units lie at residues 503 to 525 (QLTV…HFFD), 531 to 552 (RLRE…IRLS), 557 to 579 (NLHY…YIAS), 582 to 602 (SLIS…TILS), 606 to 628 (KLRE…AYCK), and 632 to 657 (LLEH…IFCT).

This sequence belongs to the DRC6 family. Component of the nexin-dynein regulatory complex (N-DRC). Directly interacts with SKP1 and CUL1. Interacts with TCTE1/DRC5.

It is found in the cytoplasm. The protein resides in the cytoskeleton. It localises to the flagellum axoneme. Its subcellular location is the microtubule organizing center. The protein localises to the centrosome. In terms of biological role, substrate-recognition component of the SCF (SKP1-CUL1-F-box protein)-type E3 ubiquitin ligase complex. Component of the nexin-dynein regulatory complex (N-DRC), a key regulator of ciliary/flagellar motility which maintains the alignment and integrity of the distal axoneme and regulates microtubule sliding in motile axonemes. Specifically targets CEP192 isoform 3 for ubiquitin-mediated proteolysis and thereby acts as a regulator of microtubule nucleation activity. In Mus musculus (Mouse), this protein is F-box and leucine-rich repeat protein 13 (Fbxl13).